The primary structure comprises 291 residues: ATP synthase gamma chain (291 aa).

The protein belongs to the ATPase gamma chain family. As to quaternary structure, F-type ATPases have 2 components, CF(1) - the catalytic core - and CF(0) - the membrane proton channel. CF(1) has five subunits: alpha(3), beta(3), gamma(1), delta(1), epsilon(1). CF(0) has three main subunits: a, b and c.

Its subcellular location is the cell inner membrane. Functionally, produces ATP from ADP in the presence of a proton gradient across the membrane. The gamma chain is believed to be important in regulating ATPase activity and the flow of protons through the CF(0) complex. This Caulobacter vibrioides (strain NA1000 / CB15N) (Caulobacter crescentus) protein is ATP synthase gamma chain.